The chain runs to 1122 residues: Cytosolic carboxypeptidase 4 (1122 aa).

The segment at 287 to 338 (PGSTSSELPLNLTEEDFDDDGDEEMDKDSDVEAVKEDDDLETDLSKLSSKPG) is disordered. Acidic residues predominate over residues 299 to 313 (TEEDFDDDGDEEMDK). The Peptidase M14 domain maps to 731–1021 (YPYTYSTLMT…MYCLGLLILE (291 aa)). Zn(2+)-binding residues include His-803, Glu-806, and His-900. Catalysis depends on Glu-985, which acts as the Proton donor/acceptor. The interval 1099-1122 (CALNKDEEEEEKEEGTGWRRRSVT) is disordered.

The protein belongs to the peptidase M14 family. In terms of assembly, interacts with MYLK. Interacts with TCF4. Zn(2+) serves as cofactor. As to expression, widely expressed at low level. Expressed in eye, muscle, pituitary, testis and to a lower extent in brain.

It localises to the cytoplasm. It is found in the cytosol. It carries out the reaction (L-glutamyl)(n+1)-gamma-L-glutamyl-L-glutamyl-[protein] + H2O = (L-glutamyl)(n)-gamma-L-glutamyl-L-glutamyl-[protein] + L-glutamate. The catalysed reaction is C-terminal L-alpha-aminoacyl-L-glutamyl-L-glutamyl-[tubulin] + H2O = C-terminal L-alpha-aminoacyl-L-glutamyl-[tubulin] + L-glutamate. Functionally, metallocarboxypeptidase that mediates deglutamylation of tubulin and non-tubulin target proteins. Catalyzes the removal of polyglutamate side chains present on the gamma-carboxyl group of glutamate residues within the C-terminal tail of tubulin protein. Specifically cleaves tubulin long-side-chains, while it is not able to remove the branching point glutamate. Also catalyzes the removal of polyglutamate residues from the carboxy-terminus of non-tubulin proteins such as MYLK. The chain is Cytosolic carboxypeptidase 4 from Mus musculus (Mouse).